The chain runs to 489 residues: MSISAEDLSTQPQRRKLPEIAELIDETLKAYPEKFAKRRAKHLNVYEEGKSECDVKSNIKSVPGVMTIRGCAYAGSYGVVWSPVKDMIHISHGPVGCGHYARAGRRAYYIGTTGVDTYTTMHFTSDFQEKDIVFGGDKKLAKLMDELEELFPMSKGITVQSECPIGLIGDDIEAVSKKKAAEFGKPVVPNRCEGFRGVSQSLGHHIANDSIRDWVLDPAADKHPDFESTPYDVTLLGDYNIGGDWGSRIILEEMGLRVIAQWSGDAPSRSSTASSKSKLNLLHCYRSVNYITRHMEEKYGIPYIEFNFFGPTKIKESLRQIAAFFDESIQEKAEKAIAKYQPQWDAVVEKFRPRLEGKKVMLFVGGLRPGHTIGAFEDLGMEVIGTGYEFGHNDDYQRTTHEIKGNTLIYDDVTGYEFEKFAEKLRPDLVASGVKEKYIFQKMGFPFRQMHSWDYSGPYHGPDGFAIFARDMDMAVNNPVWGLTQAPWK.

[8Fe-7S] cluster contacts are provided by Cys71, Cys97, and Cys163. [7Fe-Mo-9S-C-homocitryl] cluster contacts are provided by Cys284 and His451.

The protein belongs to the NifD/NifK/NifE/NifN family. Tetramer of two alpha and two beta chains. Forms complex with the iron protein (nitrogenase component 2). [8Fe-7S] cluster is required as a cofactor. It depends on [7Fe-Mo-9S-C-homocitryl] cluster as a cofactor.

The catalysed reaction is N2 + 8 reduced [2Fe-2S]-[ferredoxin] + 16 ATP + 16 H2O = H2 + 8 oxidized [2Fe-2S]-[ferredoxin] + 2 NH4(+) + 16 ADP + 16 phosphate + 6 H(+). In terms of biological role, this molybdenum-iron protein is part of the nitrogenase complex that catalyzes the key enzymatic reactions in nitrogen fixation. The sequence is that of Nitrogenase molybdenum-iron protein alpha chain (nifD) from Acidithiobacillus ferridurans.